A 339-amino-acid polypeptide reads, in one-letter code: MTSQRSLSSPQTRRPSVMGLISLVGSIVLLFLLIFRASTWACLFCFTTYEERLRVCQLFVGREETKINLCRNELEGAFEDLKDMKINYDERSYLHDEFTQMTVSLQEKAARRREPFWLAFKDAAAKLKRTIEHLKKAPACIPPCGLQEVARLFHCSGCFSKLCDLPLDCPVQDMLVNRGDQALFSCIVAFELPESEITYSWKFVGGVRTKDVTYFRDMPGAHGYLARIRPVQPKHGGTFSCVILHDQRPLARLYFYLNVTGPPPPEDTELQVTFREVMNRTPAEPEMIQPWSPSLGELLTNPQALTLGNLFLLAATAALGSASVTLLVWLFFRWYLSGN.

A signal peptide spans M1–A41. A CXXC motif motif is present at residues C42 to C45. 6 disulfides stabilise this stretch: C42-C155, C45-C158, C56-C70, C140-C163, C144-C169, and C186-C241. At C42–L310 the chain is on the extracellular side. A CXXC motif motif is present at residues C155–C158. The region spanning P166–A251 is the Ig-like domain. An N-linked (GlcNAc...) asparagine glycan is attached at N258. A helical transmembrane segment spans residues F311–F331. Residues F332–N339 lie on the Cytoplasmic side of the membrane.

Belongs to the SPACA6 family. As to quaternary structure, forms a complex with IZUMO1 and TMEM81 on spermatocyte cell membrane required for fertilization. As to expression, highly expressed in testis. Minor expression also detected in epididymis, seminal vesicle and ovary. Predominantly expressed in testicular germ cells during spermiogenesis. Most abundant in round spermatids and detected at lower levels in elongating spermatids.

It localises to the cytoplasmic vesicle. Its subcellular location is the secretory vesicle. The protein resides in the acrosome membrane. In terms of biological role, sperm protein required for fusion of sperm with the egg membrane during fertilization. May regulate the expression of sperm surface protein DCST2. The chain is Sperm acrosome membrane-associated protein 6 from Mus musculus (Mouse).